Reading from the N-terminus, the 141-residue chain is Hemoglobin subunit alpha (141 aa).

Positions 1-141 constitute a Globin domain; sequence VLSAADKGNV…VSTVLTSKYR (141 aa). Phosphoserine is present on serine 3. N6-succinyllysine is present on residues lysine 7 and lysine 11. Lysine 16 is modified (N6-acetyllysine; alternate). An N6-succinyllysine; alternate modification is found at lysine 16. A Phosphotyrosine modification is found at tyrosine 24. Position 35 is a phosphoserine (serine 35). Residue lysine 40 is modified to N6-succinyllysine. Histidine 58 provides a ligand contact to O2. Histidine 87 serves as a coordination point for heme b. Serine 102 bears the Phosphoserine mark. Threonine 108 is subject to Phosphothreonine. Serine 124 and serine 131 each carry phosphoserine. Residues threonine 134 and threonine 137 each carry the phosphothreonine modification. Serine 138 bears the Phosphoserine mark.

It belongs to the globin family. In terms of assembly, heterotetramer of two alpha chains and two beta chains. In terms of tissue distribution, red blood cells.

In terms of biological role, involved in oxygen transport from the lung to the various peripheral tissues. Functionally, hemopressin acts as an antagonist peptide of the cannabinoid receptor CNR1. Hemopressin-binding efficiently blocks cannabinoid receptor CNR1 and subsequent signaling. The protein is Hemoglobin subunit alpha (HBA) of Macrotus californicus (Californian leaf-nosed bat).